We begin with the raw amino-acid sequence, 229 residues long: Deoxyribose-phosphate aldolase (229 aa).

Residue aspartate 84 is the Proton donor/acceptor of the active site. The active-site Schiff-base intermediate with acetaldehyde is the lysine 146. Catalysis depends on lysine 188, which acts as the Proton donor/acceptor.

It belongs to the DeoC/FbaB aldolase family. DeoC type 1 subfamily.

The protein localises to the cytoplasm. The enzyme catalyses 2-deoxy-D-ribose 5-phosphate = D-glyceraldehyde 3-phosphate + acetaldehyde. Its pathway is carbohydrate degradation; 2-deoxy-D-ribose 1-phosphate degradation; D-glyceraldehyde 3-phosphate and acetaldehyde from 2-deoxy-alpha-D-ribose 1-phosphate: step 2/2. In terms of biological role, catalyzes a reversible aldol reaction between acetaldehyde and D-glyceraldehyde 3-phosphate to generate 2-deoxy-D-ribose 5-phosphate. This chain is Deoxyribose-phosphate aldolase, found in Pyrobaculum neutrophilum (strain DSM 2338 / JCM 9278 / NBRC 100436 / V24Sta) (Thermoproteus neutrophilus).